A 277-amino-acid chain; its full sequence is Co-chaperone protein DjlA (277 aa).

Topologically, residues 1–6 (MRYWGK) are periplasmic. The chain crosses the membrane as a helical span at residues 7-31 (LLGLVLGVMYAPGVVGALLGLLVGH). The Cytoplasmic portion of the chain corresponds to 32–277 (MVDRALGAKR…DLIKREKGFK (246 aa)). A J domain is found at 211 to 277 (DACKVLGVNS…DLIKREKGFK (67 aa)).

As to quaternary structure, homodimer.

Its subcellular location is the cell inner membrane. Regulatory DnaK co-chaperone. Direct interaction between DnaK and DjlA is needed for the induction of the wcaABCDE operon, involved in the synthesis of a colanic acid polysaccharide capsule, possibly through activation of the RcsB/RcsC phosphotransfer signaling pathway. The colanic acid capsule may help the bacterium survive conditions outside the host. In Yersinia pestis, this protein is Co-chaperone protein DjlA.